Reading from the N-terminus, the 462-residue chain is Metacaspase-1 (462 aa).

A compositionally biased stretch (pro residues) spans 1–21 (MSYYPPPSGYPGGPPAYPPPQ). The disordered stretch occupies residues 1 to 150 (MSYYPPPSGY…PPPPSGSVAF (150 aa)). Over residues 22 to 33 (QQQQQQQQYPSY) the composition is skewed to low complexity. Pro residues-rich tracts occupy residues 49–69 (PSYP…PPHS) and 77–102 (SPQP…PPSP). Residues His253 and Cys309 contribute to the active site.

This sequence belongs to the peptidase C14B family.

Its function is as follows. Involved in cell death (apoptosis). The polypeptide is Metacaspase-1 (MCA1) (Coccidioides immitis (strain RS) (Valley fever fungus)).